A 369-amino-acid chain; its full sequence is Iron-sulfur cluster carrier protein (369 aa).

ATP is bound at residue 115–122; that stretch reads GKGGVGKS.

It belongs to the Mrp/NBP35 ATP-binding proteins family. In terms of assembly, homodimer. Holo-ApbC forms a mixture of homodimers and homotetramers.

Functionally, binds and transfers iron-sulfur (Fe-S) clusters to target apoproteins. Can hydrolyze ATP. Both activities are required for function in vivo, but the ability to hydrolyze ATP is not necessary for Fe-S cluster transfer. This is Iron-sulfur cluster carrier protein from Salmonella typhimurium (strain LT2 / SGSC1412 / ATCC 700720).